A 288-amino-acid polypeptide reads, in one-letter code: Syntaxin-1B (288 aa).

Basic and acidic residues predominate over residues 1–13; sequence MKDRTQELRSAKD. The interval 1 to 20 is disordered; that stretch reads MKDRTQELRSAKDSDDEEEV. Residues 1 to 264 are Cytoplasmic-facing; that stretch reads MKDRTQELRS…KYQSKARRKK (264 aa). Phosphoserine is present on residues S10 and S14. Residues 29–104 adopt a coiled-coil conformation; it reads MDEFFEQVEE…IEQSIEQEEG (76 aa). The t-SNARE coiled-coil homology domain maps to 191–253; sequence LNEIETRHNE…ERAVSDTKKA (63 aa). The chain crosses the membrane as a helical; Anchor for type IV membrane protein span at residues 265–288; the sequence is IMIIICCVVLGVVLASSIGGTLGL.

The protein belongs to the syntaxin family. Interacts with OTOF. Interacts with SYT6 and SYT8; the interaction is Ca(2+)-dependent. Phosphorylated by CK2. Post-translationally, (Microbial infection) Targeted and hydrolyzed by C.botulinum neurotoxin type C (BoNT/C); cleavage by BoNT/C inhibits neurotransmitter release. Probably hydrolyzes the 252-Lys-|-Ala-253 bond.

It is found in the membrane. In terms of biological role, potentially involved in docking of synaptic vesicles at presynaptic active zones. May mediate Ca(2+)-regulation of exocytosis acrosomal reaction in sperm. In Bos taurus (Bovine), this protein is Syntaxin-1B (STX1B).